A 349-amino-acid polypeptide reads, in one-letter code: Green-sensitive opsin-2 (349 aa).

Topologically, residues Met-1–Gln-36 are extracellular. Residues Asn-2 and Asn-15 are each glycosylated (N-linked (GlcNAc...) asparagine). The helical transmembrane segment at Phe-37–Cys-61 threads the bilayer. Topologically, residues Thr-62 to Asn-73 are cytoplasmic. A helical transmembrane segment spans residues Phe-74 to Ile-99. Residues Asn-100–Glu-113 lie on the Extracellular side of the membrane. Cys-110 and Cys-187 are oxidised to a cystine. The chain crosses the membrane as a helical span at residues Gly-114–Ile-133. The Cytoplasmic segment spans residues Glu-134–His-152. A helical membrane pass occupies residues Ala-153–Ser-176. At Arg-177 to Ser-202 the chain is on the extracellular side. The chain crosses the membrane as a helical span at residues Tyr-203 to Val-230. Topologically, residues Lys-231–Lys-252 are cytoplasmic. Residues Met-253–Phe-276 form a helical membrane-spanning segment. The Extracellular portion of the chain corresponds to Phe-277–Ser-284. The helical transmembrane segment at Ala-285 to Leu-309 threads the bilayer. Position 296 is an N6-(retinylidene)lysine (Lys-296). Residues Asn-310–Ala-349 are Cytoplasmic-facing. The segment at Gly-329–Ala-349 is disordered. Over residues Ser-334 to Ala-349 the composition is skewed to low complexity.

Belongs to the G-protein coupled receptor 1 family. Opsin subfamily. Post-translationally, phosphorylated on some or all of the serine and threonine residues present in the C-terminal region. The color pigments are found in the cone photoreceptor cells.

The protein resides in the membrane. Functionally, visual pigments are the light-absorbing molecules that mediate vision. They consist of an apoprotein, opsin, covalently linked to cis-retinal. This is Green-sensitive opsin-2 from Carassius auratus (Goldfish).